A 541-amino-acid polypeptide reads, in one-letter code: Phosphoenolpyruvate carboxykinase (ATP) (541 aa).

Residues Arg64, Tyr206, and Lys212 each contribute to the substrate site. Residues Lys212, His231, and 247–255 (GLSGTGKTT) contribute to the ATP site. Mn(2+) contacts are provided by Lys212 and His231. Asp268 lines the Mn(2+) pocket. ATP is bound by residues Glu296, Arg332, and Thr454. Substrate is bound at residue Arg332.

Belongs to the phosphoenolpyruvate carboxykinase (ATP) family. As to quaternary structure, monomer. Mn(2+) is required as a cofactor.

The protein localises to the cytoplasm. The catalysed reaction is oxaloacetate + ATP = phosphoenolpyruvate + ADP + CO2. Its pathway is carbohydrate biosynthesis; gluconeogenesis. Functionally, involved in the gluconeogenesis. Catalyzes the conversion of oxaloacetate (OAA) to phosphoenolpyruvate (PEP) through direct phosphoryl transfer between the nucleoside triphosphate and OAA. The sequence is that of Phosphoenolpyruvate carboxykinase (ATP) from Wigglesworthia glossinidia brevipalpis.